The sequence spans 837 residues: Translation initiation factor IF-2 (837 aa).

Residues 94 to 253 form a disordered region; sequence KRSPDEIEAE…QHGFQNPTGP (160 aa). Residues 95 to 148 show a composition bias toward basic and acidic residues; the sequence is RSPDEIEAERQRELEEQRAAEEAERLKAEEAAARQRAEEEARKAEEAARAKAAE. The segment covering 149–171 has biased composition (low complexity); the sequence is EAVSAQPAAAVEVAAAEPVAKPA. 2 stretches are compositionally biased toward basic and acidic residues: residues 172-188 and 220-229; these read AAEERKKEEPRRVPKRD and STDEESDGYR. The span at 230–244 shows a compositional bias: basic residues; that stretch reads RGGRGGKSKLKKRNQ. The tr-type G domain occupies 337–506; that stretch reads TRAPVVTVMG…LLQAEVLELK (170 aa). The tract at residues 346-353 is G1; sequence GHVDHGKT. 346–353 provides a ligand contact to GTP; it reads GHVDHGKT. A G2 region spans residues 371–375; sequence GITQH. The tract at residues 392-395 is G3; that stretch reads DTPG. GTP-binding positions include 392 to 396 and 446 to 449; these read DTPGH and NKID. The G4 stretch occupies residues 446–449; sequence NKID. Residues 482–484 are G5; sequence SAK.

It belongs to the TRAFAC class translation factor GTPase superfamily. Classic translation factor GTPase family. IF-2 subfamily.

It is found in the cytoplasm. Its function is as follows. One of the essential components for the initiation of protein synthesis. Protects formylmethionyl-tRNA from spontaneous hydrolysis and promotes its binding to the 30S ribosomal subunits. Also involved in the hydrolysis of GTP during the formation of the 70S ribosomal complex. In Pseudomonas paraeruginosa (strain DSM 24068 / PA7) (Pseudomonas aeruginosa (strain PA7)), this protein is Translation initiation factor IF-2.